The sequence spans 217 residues: NADPH-dependent 3-demethoxyubiquinone 3-hydroxylase, mitochondrial (217 aa).

Tandem repeats lie at residues 49 to 130 and 131 to 217. The interval 49–217 is 2 X approximate tandem repeats; the sequence is IIERIIRVDH…KTAIWLSTRV (169 aa). R52 lines the NADH pocket. 6 residues coordinate Fe cation: E61, E91, H94, E143, E178, and H181. NADH is bound at residue R216.

Belongs to the COQ7 family. In terms of assembly, component of a multi-subunit COQ enzyme complex. It depends on Fe cation as a cofactor.

It localises to the mitochondrion inner membrane. The catalysed reaction is a 5-methoxy-2-methyl-3-(all-trans-polyprenyl)benzoquinone + NADH + O2 = a 3-demethylubiquinone + NAD(+) + H2O. Its pathway is cofactor biosynthesis; ubiquinone biosynthesis. Its function is as follows. Catalyzes the hydroxylation of the 5-methoxy-2-methyl-3-(all-trans-polyprenyl)benzoquinone at the C6 position and participates in the biosynthesis of ubiquinone. Catalyzes the reaction through a substrate-mediated reduction pathway, whereby NADH shuttles electrons to 5-methoxy-2-methyl-3-(all-trans-decaprenyl)benzoquinone, which then transfers the electrons to the two Fe(3+) centers. The binding of 5-methoxy-2-methyl-3-(all-trans-polyprenyl)benzoquinone (DMQn) mediates reduction of the diiron center by nicotinamide adenine dinucleotide (NADH) and initiates oxygen activation for subsequent DMQ hydroxylation. Also has a structural role in the COQ enzyme complex, stabilizing other COQ polypeptides. The chain is NADPH-dependent 3-demethoxyubiquinone 3-hydroxylase, mitochondrial from Dictyostelium discoideum (Social amoeba).